Here is a 666-residue protein sequence, read N- to C-terminus: Amyloid beta A4 precursor protein-binding family B member 1-interacting protein (666 aa).

Ser55 carries the phosphoserine modification. Residues 122 to 155 are disordered; it reads SQYEDDLPPPPADPVLDLPLPPPPPEPLSQEEEE. Over residues 129–148 the composition is skewed to pro residues; the sequence is PPPPADPVLDLPLPPPPPEP. In terms of domain architecture, Ras-associating spans 176-263; sequence KKLVVKVHMN…KILFLEKEEK (88 aa). A PH domain is found at 310 to 419; it reads VPELEGALYL…WVMGIRIAKY (110 aa). The interval 448–666 is disordered; sequence AAAPAQPSTG…ALQKKRGNVS (219 aa). Over residues 453–478 the composition is skewed to polar residues; the sequence is QPSTGPKTGTTQPNGQIPQATHSVSA. The span at 483–504 shows a compositional bias: basic and acidic residues; that stretch reads AQRHAETSKDKKPALGNHHDPA. Ser526 carries the post-translational modification Phosphoserine. Position 528 is a phosphothreonine (Thr528). Ser531 carries the post-translational modification Phosphoserine. 2 stretches are compositionally biased toward pro residues: residues 547–589 and 598–631; these read PAPP…PPPS and LPPP…PVPP.

Belongs to the MRL family. In terms of assembly, interacts, through the N-terminal Pro-rich region, with the WW domain of APBB1. Interacts with RAP1A, PFN1, TLN1, VASP, VCL and ENAH. Widely expressed with high expression in thymus, spleen, lymph node, bone marrow and peripheral leukocytes.

It is found in the cell membrane. The protein localises to the cell projection. Its subcellular location is the lamellipodium. The protein resides in the cell junction. It localises to the focal adhesion. It is found in the cytoplasm. The protein localises to the cytoskeleton. Its function is as follows. Appears to function in the signal transduction from Ras activation to actin cytoskeletal remodeling. Suppresses insulin-induced promoter activities through AP1 and SRE. Mediates Rap1-induced adhesion. This chain is Amyloid beta A4 precursor protein-binding family B member 1-interacting protein (APBB1IP), found in Homo sapiens (Human).